Consider the following 304-residue polypeptide: Glycine--tRNA ligase alpha subunit (304 aa).

It belongs to the class-II aminoacyl-tRNA synthetase family. As to quaternary structure, tetramer of two alpha and two beta subunits.

The protein localises to the cytoplasm. It carries out the reaction tRNA(Gly) + glycine + ATP = glycyl-tRNA(Gly) + AMP + diphosphate. This is Glycine--tRNA ligase alpha subunit from Vibrio atlanticus (strain LGP32) (Vibrio splendidus (strain Mel32)).